The chain runs to 458 residues: Phosphoglucosamine mutase (458 aa).

The Phosphoserine intermediate role is filled by serine 100. The Mg(2+) site is built by serine 100, aspartate 254, aspartate 256, and aspartate 258. Serine 100 carries the post-translational modification Phosphoserine.

It belongs to the phosphohexose mutase family. Mg(2+) serves as cofactor. In terms of processing, activated by phosphorylation.

The catalysed reaction is alpha-D-glucosamine 1-phosphate = D-glucosamine 6-phosphate. Catalyzes the conversion of glucosamine-6-phosphate to glucosamine-1-phosphate. The polypeptide is Phosphoglucosamine mutase (Nocardia farcinica (strain IFM 10152)).